Reading from the N-terminus, the 209-residue chain is Uracil phosphoribosyltransferase (209 aa).

5-phospho-alpha-D-ribose 1-diphosphate contacts are provided by residues arginine 79, arginine 104, and aspartate 131–serine 139. Residues isoleucine 194 and glycine 199 to alanine 201 contribute to the uracil site. Aspartate 200 provides a ligand contact to 5-phospho-alpha-D-ribose 1-diphosphate.

It belongs to the UPRTase family. Mg(2+) is required as a cofactor.

The catalysed reaction is UMP + diphosphate = 5-phospho-alpha-D-ribose 1-diphosphate + uracil. The protein operates within pyrimidine metabolism; UMP biosynthesis via salvage pathway; UMP from uracil: step 1/1. Its activity is regulated as follows. Allosterically activated by GTP. Functionally, catalyzes the conversion of uracil and 5-phospho-alpha-D-ribose 1-diphosphate (PRPP) to UMP and diphosphate. The protein is Uracil phosphoribosyltransferase of Finegoldia magna (strain ATCC 29328 / DSM 20472 / WAL 2508) (Peptostreptococcus magnus).